The chain runs to 859 residues: Leucine--tRNA ligase (859 aa).

Residues 42-52 (PYPSGRLHMGH) carry the 'HIGH' region motif. The 'KMSKS' region motif lies at 618 to 622 (KMSKS). Lys-621 is an ATP binding site.

Belongs to the class-I aminoacyl-tRNA synthetase family.

It localises to the cytoplasm. It catalyses the reaction tRNA(Leu) + L-leucine + ATP = L-leucyl-tRNA(Leu) + AMP + diphosphate. The sequence is that of Leucine--tRNA ligase from Shewanella sp. (strain W3-18-1).